A 114-amino-acid chain; its full sequence is Protachykinin (114 aa).

The first 19 residues, 1-19 (MKFLLPSIVIFLVLCQVFG), serve as a signal peptide directing secretion. Residues 20–55 (EELGPKEDLDYWTGSNQVQDEWLQADPFREIIRRMT) constitute a propeptide that is removed on maturation. Methionine amide is present on residues Met67 and Met91.

This sequence belongs to the tachykinin family. Expressed in all parts of the brain, with robust expression in the olfactory bulbs and tracts, moderate expression in the hypothalamus and posterior brain, and weak expression in the telencephalon-preoptic region and optic tectum-thalamus. Also expressed in nerve fibers, intestine, testes and pituitary gland. Not expressed in the liver or kidneys.

It localises to the secreted. In terms of biological role, tachykinins are active peptides which excite neurons, evoke behavioral responses, are potent vasodilators and secretagogues, and contract (directly or indirectly) many smooth muscles. Functionally, substance P produces a voltage-dependent inhibition of calcium current in retinal bipolar cells. It can enhance learning and memory, may regulate social approach and feeding behaviors, and can accelerate the functional recovery in postural balance in response to light after unilateral labyrinthectomy. The protein is Protachykinin of Carassius auratus (Goldfish).